Consider the following 112-residue polypeptide: Flowering-promoting factor 1-like protein 2 (112 aa).

It belongs to the FPF1 family. Expressed in leaves and in some parts of the flowers, mainly in the sepals.

Its function is as follows. Modulates the competence to flowering of apical meristems. The protein is Flowering-promoting factor 1-like protein 2 (FLP2) of Arabidopsis thaliana (Mouse-ear cress).